The primary structure comprises 228 residues: Superoxide dismutase [Mn] (228 aa).

The N-terminal stretch at 1 to 23 (MTRSLKTTLILLASSVISMSALA) is a signal peptide. H49, H100, D188, and H192 together coordinate Mn(2+).

This sequence belongs to the iron/manganese superoxide dismutase family. It depends on Mn(2+) as a cofactor.

Its subcellular location is the periplasm. It catalyses the reaction 2 superoxide + 2 H(+) = H2O2 + O2. Functionally, destroys superoxide anion radicals which are normally produced within the cells and which are toxic to biological systems. This is Superoxide dismutase [Mn] (sodA) from Acinetobacter baylyi (strain ATCC 33305 / BD413 / ADP1).